A 400-amino-acid polypeptide reads, in one-letter code: Lysophospholipid transporter LplT (400 aa).

12 consecutive transmembrane segments (helical) span residues 19 to 39, 53 to 73, 91 to 111, 139 to 159, 164 to 184, 195 to 213, 227 to 247, 257 to 277, 281 to 301, 304 to 324, 352 to 372, and 373 to 393; these read VIVA…ATLA, VLQM…GQIA, AGAA…LVGI, LMEA…GVLA, IAAL…NLFI, SWRL…VVLW, LFWG…PVAL, YLNA…AKLV, TVSR…IFSL, ALLP…FFVV, NSAM…GVPA, and VAIG…LWIW.

It belongs to the major facilitator superfamily. LplT (TC 2.A.1.42) family.

The protein localises to the cell inner membrane. Functionally, catalyzes the facilitated diffusion of 2-acyl-glycero-3-phosphoethanolamine (2-acyl-GPE) into the cell. This Salmonella newport (strain SL254) protein is Lysophospholipid transporter LplT.